A 235-amino-acid chain; its full sequence is Large ribosomal subunit protein uL3 (235 aa).

Residues 138-157 (SVSHRSHGSTGGRQDPGKTF) form a disordered region. At Q151 the chain carries N5-methylglutamine.

It belongs to the universal ribosomal protein uL3 family. In terms of assembly, part of the 50S ribosomal subunit. Forms a cluster with proteins L14 and L19. Post-translationally, methylated by PrmB.

One of the primary rRNA binding proteins, it binds directly near the 3'-end of the 23S rRNA, where it nucleates assembly of the 50S subunit. In Rhodospirillum centenum (strain ATCC 51521 / SW), this protein is Large ribosomal subunit protein uL3.